A 707-amino-acid polypeptide reads, in one-letter code: Elongation factor G (707 aa).

One can recognise a tr-type G domain in the interval 8-294 (ERYRNFGIIA…GVVDYLPSPL (287 aa)). Residues 17 to 24 (AHIDAGKT), 92 to 96 (DTPGH), and 146 to 149 (NKMD) contribute to the GTP site.

This sequence belongs to the TRAFAC class translation factor GTPase superfamily. Classic translation factor GTPase family. EF-G/EF-2 subfamily.

The protein resides in the cytoplasm. Its function is as follows. Catalyzes the GTP-dependent ribosomal translocation step during translation elongation. During this step, the ribosome changes from the pre-translocational (PRE) to the post-translocational (POST) state as the newly formed A-site-bound peptidyl-tRNA and P-site-bound deacylated tRNA move to the P and E sites, respectively. Catalyzes the coordinated movement of the two tRNA molecules, the mRNA and conformational changes in the ribosome. This Hyphomonas neptunium (strain ATCC 15444) protein is Elongation factor G.